A 352-amino-acid polypeptide reads, in one-letter code: NADH-ubiquinone oxidoreductase chain 2 (352 aa).

11 helical membrane-spanning segments follow: residues 4 to 24, 26 to 46, 60 to 80, 96 to 116, 124 to 144, 150 to 170, 178 to 198, 205 to 225, 241 to 261, 274 to 294, and 330 to 350; these read MISIFLFLTVVSGTIIVVSAE, WFVIWLGLELSTLALIPILWF, FLVQAFSAALLLNSALIQAWF, LCLSVALAFNLGLAACHFWLP, FIQGLIIATWQKIAPLFLLFY, FSYFIILAALISILVGGWGGL, ILAFSSIGNMGWIVVTSAFSL, LFIYLVINTSIFLILDFLSIF, ITLVILTILSLGGLPPLTGFI, GFIFFSSVMIIGSLLSLFFYL, and LVSSFSVLSILAIPLTIPLYI.

The protein belongs to the complex I subunit 2 family.

Its subcellular location is the mitochondrion inner membrane. The catalysed reaction is a ubiquinone + NADH + 5 H(+)(in) = a ubiquinol + NAD(+) + 4 H(+)(out). Core subunit of the mitochondrial membrane respiratory chain NADH dehydrogenase (Complex I) that is believed to belong to the minimal assembly required for catalysis. Complex I functions in the transfer of electrons from NADH to the respiratory chain. The immediate electron acceptor for the enzyme is believed to be ubiquinone. The sequence is that of NADH-ubiquinone oxidoreductase chain 2 (ND2) from Paracentrotus lividus (Common sea urchin).